The sequence spans 340 residues: MAKWLRDYLSFGGRRPPPQPPTPDYTESDILRAYRAQKNLDFEDPYEDAESRLEPDPAGPGDSKNPGDAKYGSPKHRLIKVEAADMARAKALLGGPGEELEADTEYLDPFDAQPHPAPPDDGYMEPYDAQWVMSELPGRGVQLYDTPYEEQDPETADGPPSGQKPRQSRMPQEDERPADEYDQPWEWKKDHISRAFAVQFDSPEWERTPGSAKELRRPPPRSPQPAERVDPALPLEKQPWFHGPLNRADAESLLSLCKEGSYLVRLSETNPQDCSLSLRSSQGFLHLKFARTRENQVVLGQHSGPFPSVPELVLHYSSRPLPVQGAEHLALLYPVVTQTP.

Disordered regions lie at residues 1–77 (MAKW…PKHR), 94–186 (GGPG…QPWE), and 198–230 (VQFD…ERVD). Acidic residues predominate over residues 98 to 108 (EELEADTEYLD). Residues 171–186 (PQEDERPADEYDQPWE) show a composition bias toward basic and acidic residues. Residues 240 to 335 (WFHGPLNRAD…AEHLALLYPV (96 aa)) form the SH2 domain.

In terms of processing, tyrosine phosphorylated by ABL.

In terms of biological role, may function as an adapter protein. The protein is SH2 domain-containing adapter protein D (SHD) of Homo sapiens (Human).